The chain runs to 116 residues: Large ribosomal subunit protein bL20 (116 aa).

This sequence belongs to the bacterial ribosomal protein bL20 family.

Its function is as follows. Binds directly to 23S ribosomal RNA and is necessary for the in vitro assembly process of the 50S ribosomal subunit. It is not involved in the protein synthesizing functions of that subunit. This is Large ribosomal subunit protein bL20 from Helicobacter pylori (strain HPAG1).